The chain runs to 264 residues: Hydroxyethylthiazole kinase (264 aa).

A substrate-binding site is contributed by methionine 45. Residues arginine 121 and serine 167 each coordinate ATP. Glycine 194 serves as a coordination point for substrate.

The protein belongs to the Thz kinase family. The cofactor is Mg(2+).

It carries out the reaction 5-(2-hydroxyethyl)-4-methylthiazole + ATP = 4-methyl-5-(2-phosphooxyethyl)-thiazole + ADP + H(+). It participates in cofactor biosynthesis; thiamine diphosphate biosynthesis; 4-methyl-5-(2-phosphoethyl)-thiazole from 5-(2-hydroxyethyl)-4-methylthiazole: step 1/1. Functionally, catalyzes the phosphorylation of the hydroxyl group of 4-methyl-5-beta-hydroxyethylthiazole (THZ). In Aliivibrio salmonicida (strain LFI1238) (Vibrio salmonicida (strain LFI1238)), this protein is Hydroxyethylthiazole kinase.